The chain runs to 260 residues: Snake venom serine protease KN6 (260 aa).

Residues 1 to 18 (MVLIRVLANLLILQLSYA) form the signal peptide. The propeptide occupies 19 to 24 (QKSSEL). Residues 25 to 251 (VIGGDECNIN…HLDWIQSIIA (227 aa)) enclose the Peptidase S1 domain. 5 cysteine pairs are disulfide-bonded: C31-C165, C100-C258, C144-C212, C176-C191, and C202-C227. H67 serves as the catalytic Charge relay system. N-linked (GlcNAc...) asparagine glycosylation is present at N105. D112 functions as the Charge relay system in the catalytic mechanism. N-linked (GlcNAc...) asparagine glycosylation occurs at N172. S206 (charge relay system) is an active-site residue. Residues N213 and N255 are each glycosylated (N-linked (GlcNAc...) asparagine).

The protein belongs to the peptidase S1 family. Snake venom subfamily. As to quaternary structure, monomer. Expressed by the venom gland.

It is found in the secreted. Its function is as follows. Snake venom serine protease that may act in the hemostasis system of the prey. This chain is Snake venom serine protease KN6, found in Trimeresurus stejnegeri (Chinese green tree viper).